The sequence spans 89 residues: Calsenilin isoform 4 (89 aa).

The interval 27–57 (SSRDAEDQGSREGIGWQPPGRSWAHTTEQEG) is disordered.

As to expression, isoform 1 or isoform 4 (T+ forms) are expressed at equal levels with isoform 2 or isoform 3 (T- forms) in brain.

Functionally, unknown for isoform 4. Csen is involved in calcium-dependent transcriptional repression, regulation of potassium channels, and perhaps in processing of PSEN2 and apoptosis. This is Calsenilin isoform 4 (Kcnip3) from Mus musculus (Mouse).